The sequence spans 128 residues: Large ribosomal subunit protein bL17 (128 aa).

This sequence belongs to the bacterial ribosomal protein bL17 family. Part of the 50S ribosomal subunit. Contacts protein L32.

This is Large ribosomal subunit protein bL17 from Hydrogenovibrio crunogenus (strain DSM 25203 / XCL-2) (Thiomicrospira crunogena).